Here is a 264-residue protein sequence, read N- to C-terminus: Indole-3-glycerol phosphate synthase (264 aa).

This sequence belongs to the TrpC family.

It catalyses the reaction 1-(2-carboxyphenylamino)-1-deoxy-D-ribulose 5-phosphate + H(+) = (1S,2R)-1-C-(indol-3-yl)glycerol 3-phosphate + CO2 + H2O. It participates in amino-acid biosynthesis; L-tryptophan biosynthesis; L-tryptophan from chorismate: step 4/5. The protein is Indole-3-glycerol phosphate synthase of Albidiferax ferrireducens (strain ATCC BAA-621 / DSM 15236 / T118) (Rhodoferax ferrireducens).